The sequence spans 626 residues: Chaperone protein HtpG (626 aa).

The tract at residues 1–339 (MSQNQETRGF…SNDLPLNVSR (339 aa)) is a; substrate-binding. Residues 340–555 (EILQDNKITA…NDQMTTQMAK (216 aa)) form a b region. The c stretch occupies residues 556-626 (LFAAAGQPVP…FIKRINKLLG (71 aa)).

It belongs to the heat shock protein 90 family. In terms of assembly, homodimer.

The protein resides in the cytoplasm. Functionally, molecular chaperone. Has ATPase activity. The protein is Chaperone protein HtpG of Haemophilus influenzae (strain 86-028NP).